Reading from the N-terminus, the 470-residue chain is Aspartyl aminopeptidase (470 aa).

Position 92 (His-92) interacts with Zn(2+). His-166 provides a ligand contact to substrate. Position 263 (Asp-263) interacts with Zn(2+). Glu-299 contributes to the substrate binding site. Zn(2+) contacts are provided by Glu-300 and Asp-343. Substrate contacts are provided by Asp-343, His-346, Lys-371, and Tyr-378. His-437 contributes to the Zn(2+) binding site.

Belongs to the peptidase M18 family. As to quaternary structure, tetrahedron-shaped homododecamer built from six homodimers. The cofactor is Zn(2+). Expressed in various cell types and tissues including the pharynx, neurons, body wall muscle, intestine and vulva.

It localises to the cytoplasm. The protein resides in the cytosol. It catalyses the reaction Release of an N-terminal aspartate or glutamate from a peptide, with a preference for aspartate.. Its function is as follows. Aminopeptidase with specificity towards an acidic amino acid at the N-terminus. Plays a role in membrane trafficking and is specifically involved in the recycling and degradation of endocytic cargo. The polypeptide is Aspartyl aminopeptidase (Caenorhabditis elegans).